Reading from the N-terminus, the 391-residue chain is Phosphoglycerate kinase (391 aa).

Residues 21–23 (DLN), R36, 59–62 (HLGR), R113, and R146 contribute to the substrate site. ATP contacts are provided by residues K197, E319, and 345-348 (GGDT).

It belongs to the phosphoglycerate kinase family. In terms of assembly, monomer.

The protein localises to the cytoplasm. The catalysed reaction is (2R)-3-phosphoglycerate + ATP = (2R)-3-phospho-glyceroyl phosphate + ADP. It participates in carbohydrate degradation; glycolysis; pyruvate from D-glyceraldehyde 3-phosphate: step 2/5. This chain is Phosphoglycerate kinase, found in Xanthomonas axonopodis pv. citri (strain 306).